A 131-amino-acid polypeptide reads, in one-letter code: uncharacterized protein (131 aa).

It localises to the plastid. Its subcellular location is the chloroplast. This is an uncharacterized protein from Chlorella vulgaris (Green alga).